Here is a 591-residue protein sequence, read N- to C-terminus: Probable indole-3-acetic acid-amido synthetase GH3.11 (591 aa).

The protein belongs to the IAA-amido conjugating enzyme family. As to expression, expressed in etiolated and green seedlings, roots, callus and highly in flowers.

May catalyze the synthesis of indole-3-acetic acid (IAA)-amino acid conjugates, providing a mechanism for the plant to cope with the presence of excess auxin. The protein is Probable indole-3-acetic acid-amido synthetase GH3.11 (GH3.11) of Oryza sativa subsp. japonica (Rice).